The primary structure comprises 101 residues: Nucleoid-associated protein Acid345_1974 (101 aa).

The protein belongs to the YbaB/EbfC family. In terms of assembly, homodimer.

Its subcellular location is the cytoplasm. It localises to the nucleoid. In terms of biological role, binds to DNA and alters its conformation. May be involved in regulation of gene expression, nucleoid organization and DNA protection. This Koribacter versatilis (strain Ellin345) protein is Nucleoid-associated protein Acid345_1974.